We begin with the raw amino-acid sequence, 79 residues long: Probable 26S proteasome complex subunit sem1 (79 aa).

Residues methionine 1–aspartate 21 are compositionally biased toward basic and acidic residues. Positions methionine 1–glutamate 30 are disordered. Serine 19 carries the post-translational modification Phosphoserine.

This sequence belongs to the DSS1/SEM1 family. In terms of assembly, part of the 26S proteasome.

Subunit of the 26S proteasome which plays a role in ubiquitin-dependent proteolysis. The chain is Probable 26S proteasome complex subunit sem1 from Drosophila melanogaster (Fruit fly).